The following is a 129-amino-acid chain: Small ribosomal subunit protein uS11 (129 aa).

The protein belongs to the universal ribosomal protein uS11 family. Part of the 30S ribosomal subunit. Interacts with proteins S7 and S18. Binds to IF-3.

In terms of biological role, located on the platform of the 30S subunit, it bridges several disparate RNA helices of the 16S rRNA. Forms part of the Shine-Dalgarno cleft in the 70S ribosome. In Hamiltonella defensa subsp. Acyrthosiphon pisum (strain 5AT), this protein is Small ribosomal subunit protein uS11.